A 153-amino-acid polypeptide reads, in one-letter code: Deoxyuridine 5'-triphosphate nucleotidohydrolase (153 aa).

Substrate is bound by residues 71–73 (RSG), Asn84, 88–90 (LID), and Met98.

The protein belongs to the dUTPase family. The cofactor is Mg(2+).

The catalysed reaction is dUTP + H2O = dUMP + diphosphate + H(+). The protein operates within pyrimidine metabolism; dUMP biosynthesis; dUMP from dCTP (dUTP route): step 2/2. This enzyme is involved in nucleotide metabolism: it produces dUMP, the immediate precursor of thymidine nucleotides and it decreases the intracellular concentration of dUTP so that uracil cannot be incorporated into DNA. The protein is Deoxyuridine 5'-triphosphate nucleotidohydrolase of Wigglesworthia glossinidia brevipalpis.